A 290-amino-acid chain; its full sequence is Small ribosomal subunit biogenesis GTPase RsgA (290 aa).

One can recognise a CP-type G domain in the interval 61–218 (SSELLRPAVA…IVDTPGFSTL (158 aa)). Residues 110-113 (NKVD) and 161-169 (GPSGAGKST) each bind GTP. Cysteine 243, cysteine 248, histidine 250, and cysteine 256 together coordinate Zn(2+).

Belongs to the TRAFAC class YlqF/YawG GTPase family. RsgA subfamily. In terms of assembly, monomer. Associates with 30S ribosomal subunit, binds 16S rRNA. Zn(2+) serves as cofactor.

The protein localises to the cytoplasm. One of several proteins that assist in the late maturation steps of the functional core of the 30S ribosomal subunit. Helps release RbfA from mature subunits. May play a role in the assembly of ribosomal proteins into the subunit. Circularly permuted GTPase that catalyzes slow GTP hydrolysis, GTPase activity is stimulated by the 30S ribosomal subunit. This is Small ribosomal subunit biogenesis GTPase RsgA from Clostridium botulinum (strain Eklund 17B / Type B).